Here is a 452-residue protein sequence, read N- to C-terminus: Cobyrinate a,c-diamide synthase (452 aa).

One can recognise a GATase cobBQ-type domain in the interval 244–429; the sequence is RIAVARDRAF…LHLHWGTQAW (186 aa). The active-site Nucleophile is the C325.

It belongs to the CobB/CbiA family. Requires Mg(2+) as cofactor.

It catalyses the reaction cob(II)yrinate + 2 L-glutamine + 2 ATP + 2 H2O = cob(II)yrinate a,c diamide + 2 L-glutamate + 2 ADP + 2 phosphate + 2 H(+). It functions in the pathway cofactor biosynthesis; adenosylcobalamin biosynthesis; cob(II)yrinate a,c-diamide from sirohydrochlorin (anaerobic route): step 10/10. Catalyzes the ATP-dependent amidation of the two carboxylate groups at positions a and c of cobyrinate, using either L-glutamine or ammonia as the nitrogen source. The chain is Cobyrinate a,c-diamide synthase from Gloeobacter violaceus (strain ATCC 29082 / PCC 7421).